Here is a 363-residue protein sequence, read N- to C-terminus: dTDP-L-rhamnose 4-epimerase (363 aa).

NAD(+)-binding positions include 18 to 24, 68 to 69, and 90 to 94; these read GGAGFIG, DV, and LAAET. Ser-136 and Tyr-191 together coordinate substrate. The NAD(+) site is built by Tyr-191 and Lys-195. Catalysis depends on Tyr-191, which acts as the Proton acceptor. Substrate-binding residues include Asn-220 and Arg-259.

This sequence belongs to the NAD(P)-dependent epimerase/dehydratase family. NAD(+) serves as cofactor.

It catalyses the reaction dTDP-6-deoxy-beta-L-talose = dTDP-beta-L-rhamnose. It participates in bacterial outer membrane biogenesis; LPS O-antigen biosynthesis. Its function is as follows. Catalyzes the interconvertion of dTDP-6-deoxy-L-talose and dTDP-L-rhamnose. The equilibrium is strongly toward dTDP-L-rhamnose. The chain is dTDP-L-rhamnose 4-epimerase (wbiB) from Burkholderia thailandensis (strain ATCC 700388 / DSM 13276 / CCUG 48851 / CIP 106301 / E264).